We begin with the raw amino-acid sequence, 312 residues long: Serine acetyltransferase 5 (312 aa).

Positions 1-17 (MPPAGELRHQSPSKEKL) are enriched in basic and acidic residues. The segment at 1-25 (MPPAGELRHQSPSKEKLSSVTQSDE) is disordered.

The protein belongs to the transferase hexapeptide repeat family. In terms of assembly, homomultimer. In terms of tissue distribution, mostly expressed in stems, flowers and siliques. Localized in vascular tissues, particularly in phloem.

It localises to the cytoplasm. It carries out the reaction L-serine + acetyl-CoA = O-acetyl-L-serine + CoA. It functions in the pathway amino-acid biosynthesis; L-cysteine biosynthesis; L-cysteine from L-serine: step 1/2. With respect to regulation, feedback inhibitions by L-Ser and acetyl-CoA. The polypeptide is Serine acetyltransferase 5 (SAT5) (Arabidopsis thaliana (Mouse-ear cress)).